Reading from the N-terminus, the 346-residue chain is Lipooligosaccharide heptosyltransferase 2 (346 aa).

The protein belongs to the glycosyltransferase 9 family.

The catalysed reaction is an L-alpha-D-Hep-(1-&gt;5)-[alpha-Kdo-(2-&gt;4)]-alpha-Kdo-(2-&gt;6)-lipid A + ADP-L-glycero-beta-D-manno-heptose = an L-alpha-D-Hep-(1-&gt;3)-L-alpha-D-Hep-(1-&gt;5)-[alpha-Kdo-(2-&gt;4)]-alpha-Kdo-(2-&gt;6)-lipid A + ADP + H(+). It functions in the pathway bacterial outer membrane biogenesis; LOS core biosynthesis. Functionally, glycosyltransferase involved in the biosynthesis of the core oligosaccharide region of lipooligosaccharide (LOS). Catalyzes the addition of a heptose unit to the heptosyl-Kdo2-lipid A module. The polypeptide is Lipooligosaccharide heptosyltransferase 2 (waaF) (Haemophilus influenzae (strain ATCC 51907 / DSM 11121 / KW20 / Rd)).